Reading from the N-terminus, the 616-residue chain is Dihydroxy-acid dehydratase (616 aa).

D81 provides a ligand contact to Mg(2+). C122 contacts [2Fe-2S] cluster. 2 residues coordinate Mg(2+): D123 and K124. Position 124 is an N6-carboxylysine (K124). C195 lines the [2Fe-2S] cluster pocket. E491 provides a ligand contact to Mg(2+). The active-site Proton acceptor is S517.

It belongs to the IlvD/Edd family. In terms of assembly, homodimer. It depends on [2Fe-2S] cluster as a cofactor. Mg(2+) is required as a cofactor.

It carries out the reaction (2R)-2,3-dihydroxy-3-methylbutanoate = 3-methyl-2-oxobutanoate + H2O. The enzyme catalyses (2R,3R)-2,3-dihydroxy-3-methylpentanoate = (S)-3-methyl-2-oxopentanoate + H2O. It participates in amino-acid biosynthesis; L-isoleucine biosynthesis; L-isoleucine from 2-oxobutanoate: step 3/4. The protein operates within amino-acid biosynthesis; L-valine biosynthesis; L-valine from pyruvate: step 3/4. In terms of biological role, functions in the biosynthesis of branched-chain amino acids. Catalyzes the dehydration of (2R,3R)-2,3-dihydroxy-3-methylpentanoate (2,3-dihydroxy-3-methylvalerate) into 2-oxo-3-methylpentanoate (2-oxo-3-methylvalerate) and of (2R)-2,3-dihydroxy-3-methylbutanoate (2,3-dihydroxyisovalerate) into 2-oxo-3-methylbutanoate (2-oxoisovalerate), the penultimate precursor to L-isoleucine and L-valine, respectively. This chain is Dihydroxy-acid dehydratase, found in Escherichia coli O157:H7 (strain EC4115 / EHEC).